Here is a 331-residue protein sequence, read N- to C-terminus: Protein RecA (331 aa).

66–73 contributes to the ATP binding site; sequence GPESSGKT.

It belongs to the RecA family.

The protein localises to the cytoplasm. Functionally, can catalyze the hydrolysis of ATP in the presence of single-stranded DNA, the ATP-dependent uptake of single-stranded DNA by duplex DNA, and the ATP-dependent hybridization of homologous single-stranded DNAs. It interacts with LexA causing its activation and leading to its autocatalytic cleavage. The chain is Protein RecA from Lactobacillus delbrueckii subsp. bulgaricus (strain ATCC 11842 / DSM 20081 / BCRC 10696 / JCM 1002 / NBRC 13953 / NCIMB 11778 / NCTC 12712 / WDCM 00102 / Lb 14).